The primary structure comprises 159 residues: Eukaryotic translation initiation factor 5A-1 (159 aa).

Residues 1-12 (MSDEEHHFESKA) are compositionally biased toward basic and acidic residues. The interval 1–23 (MSDEEHHFESKADAGASKTYPQQ) is disordered. Lysine 52 carries the post-translational modification Hypusine.

This sequence belongs to the eIF-5A family. Lys-52 undergoes hypusination, a unique post-translational modification that consists in the addition of a butylamino group from spermidine to lysine side chain, leading to the formation of the unusual amino acid hypusine. eIF-5As are the only known proteins to undergo this modification, which is essential for their function.

Translation factor that promotes translation elongation and termination, particularly upon ribosome stalling at specific amino acid sequence contexts. Binds between the exit (E) and peptidyl (P) site of the ribosome and promotes rescue of stalled ribosome: specifically required for efficient translation of polyproline-containing peptides as well as other motifs that stall the ribosome. Acts as a ribosome quality control (RQC) cofactor by joining the RQC complex to facilitate peptidyl transfer during CAT tailing step. The chain is Eukaryotic translation initiation factor 5A-1 from Solanum lycopersicum (Tomato).